Reading from the N-terminus, the 206-residue chain is Small ribosomal subunit protein uS4 (206 aa).

The disordered stretch occupies residues 18-44 (NIWGRPKSPVNRREYGPGQHGQRRKGK). The region spanning 94–157 (RRLDAVVYRA…KQLAVVLEAV (64 aa)) is the S4 RNA-binding domain.

This sequence belongs to the universal ribosomal protein uS4 family. In terms of assembly, part of the 30S ribosomal subunit. Contacts protein S5. The interaction surface between S4 and S5 is involved in control of translational fidelity.

Its function is as follows. One of the primary rRNA binding proteins, it binds directly to 16S rRNA where it nucleates assembly of the body of the 30S subunit. With S5 and S12 plays an important role in translational accuracy. The polypeptide is Small ribosomal subunit protein uS4 (Jannaschia sp. (strain CCS1)).